A 374-amino-acid polypeptide reads, in one-letter code: Methionine import ATP-binding protein MetN 2 (374 aa).

The interval M1–E22 is disordered. The ABC transporter domain occupies V32 to L271. G68–S75 contributes to the ATP binding site.

This sequence belongs to the ABC transporter superfamily. Methionine importer (TC 3.A.1.24) family. In terms of assembly, the complex is composed of two ATP-binding proteins (MetN), two transmembrane proteins (MetI) and a solute-binding protein (MetQ).

It localises to the cell inner membrane. The enzyme catalyses L-methionine(out) + ATP + H2O = L-methionine(in) + ADP + phosphate + H(+). The catalysed reaction is D-methionine(out) + ATP + H2O = D-methionine(in) + ADP + phosphate + H(+). Part of the ABC transporter complex MetNIQ involved in methionine import. Responsible for energy coupling to the transport system. The protein is Methionine import ATP-binding protein MetN 2 of Pseudomonas fluorescens (strain ATCC BAA-477 / NRRL B-23932 / Pf-5).